The following is a 714-amino-acid chain: Fatty acid oxidation complex subunit alpha (714 aa).

Residues 1 to 190 (MEMASAFTLN…KLGLVDDVVP (190 aa)) form an enoyl-CoA hydratase region. The segment at 306–714 (APLNSVGILG…FWKTTATDLQ (409 aa)) is 3-hydroxyacyl-CoA dehydrogenase.

This sequence in the N-terminal section; belongs to the enoyl-CoA hydratase/isomerase family. It in the central section; belongs to the 3-hydroxyacyl-CoA dehydrogenase family. As to quaternary structure, heterotetramer of two alpha chains (FadJ) and two beta chains (FadI).

Its subcellular location is the cytoplasm. It carries out the reaction a (3S)-3-hydroxyacyl-CoA = a (2E)-enoyl-CoA + H2O. The enzyme catalyses a 4-saturated-(3S)-3-hydroxyacyl-CoA = a (3E)-enoyl-CoA + H2O. It catalyses the reaction a (3S)-3-hydroxyacyl-CoA + NAD(+) = a 3-oxoacyl-CoA + NADH + H(+). The catalysed reaction is (3S)-3-hydroxybutanoyl-CoA = (3R)-3-hydroxybutanoyl-CoA. It participates in lipid metabolism; fatty acid beta-oxidation. Catalyzes the formation of a hydroxyacyl-CoA by addition of water on enoyl-CoA. Also exhibits 3-hydroxyacyl-CoA epimerase and 3-hydroxyacyl-CoA dehydrogenase activities. The chain is Fatty acid oxidation complex subunit alpha from Shigella flexneri.